Consider the following 175-residue polypeptide: UPF0398 protein SPH_0478 (175 aa).

The protein belongs to the UPF0398 family.

This chain is UPF0398 protein SPH_0478, found in Streptococcus pneumoniae (strain Hungary19A-6).